A 139-amino-acid polypeptide reads, in one-letter code: METDCNPMELSGVSGFEEEAELNGFEGTDMKDMRLEAEAVVNDVLFAVNTMFVSKTLRCADDVAYINVETRERNRYCLELTEAGLRVVGYAFDQVDDHLQTPYHETVYSLLDTLSPAYREAFGNALLQRLEALKREGQS.

Residues 41 to 45 (VNDVL) are required for PRKAR2A interaction; contributes to a protective effect against H(2)O(2)-induced apoptosis. Residues 115–139 (SPAYREAFGNALLQRLEALKREGQS) form an interaction with GSK3B and acts as a GSK3B inhibitor region.

It belongs to the GSKIP family. In terms of assembly, forms a complex composed of PRKAR2A or PRKAR2B, GSK3B and GSKIP through GSKIP interaction; facilitates PKA-induced phosphorylation of GSK3B leading to GSK3B inactivation; recruits DNM1L through GSK3B for PKA-mediated phosphorylation of DNM1L; promotes beta-catenin degradation through GSK3B-induced phosphorylation of beta-catenin; stabilizes beta-catenin and enhances Wnt-induced signaling through PKA-induced phosphorylation of beta-catenin. Interacts with GSK3B; induces GSK3B-mediated phosphorylation of GSKIP and inhibits GSK3B kinase activity. Post-translationally, phosphorylated by GSK3B.

The protein localises to the cytoplasm. It is found in the nucleus. Its function is as follows. A-kinase anchoring protein for GSK3B and PKA that regulates or facilitates their kinase activity towards their targets. The ternary complex enhances Wnt-induced signaling by facilitating the GSK3B- and PKA-induced phosphorylation of beta-catenin leading to beta-catenin degradation and stabilization respectively. Upon cAMP activation, the ternary complex contributes to neuroprotection against oxidative stress-induced apoptosis by facilitating the PKA-induced phosphorylation of DML1 and PKA-induced inactivation of GSK3B. During neurite outgrowth promotes neuron proliferation; while increases beta-catenin-induced transcriptional activity through GSK3B kinase activity inhibition, reduces N-cadherin level to promote cell cycle progression. May play a role in cleft palate formation and is required for postnatal life through modulation of the activity of GSK3B during development. The polypeptide is GSK3B-interacting protein (Bos taurus (Bovine)).